The following is a 294-amino-acid chain: 4-hydroxy-tetrahydrodipicolinate synthase (294 aa).

Residue T45 participates in pyruvate binding. Y133 (proton donor/acceptor) is an active-site residue. K161 functions as the Schiff-base intermediate with substrate in the catalytic mechanism. I203 is a binding site for pyruvate.

The protein belongs to the DapA family. In terms of assembly, homotetramer; dimer of dimers.

The protein resides in the cytoplasm. The enzyme catalyses L-aspartate 4-semialdehyde + pyruvate = (2S,4S)-4-hydroxy-2,3,4,5-tetrahydrodipicolinate + H2O + H(+). It participates in amino-acid biosynthesis; L-lysine biosynthesis via DAP pathway; (S)-tetrahydrodipicolinate from L-aspartate: step 3/4. Catalyzes the condensation of (S)-aspartate-beta-semialdehyde [(S)-ASA] and pyruvate to 4-hydroxy-tetrahydrodipicolinate (HTPA). The polypeptide is 4-hydroxy-tetrahydrodipicolinate synthase (Shewanella frigidimarina (strain NCIMB 400)).